A 272-amino-acid chain; its full sequence is Expansin-B16 (272 aa).

Positions 1-25 (MAAFSSSSSAPMLIRSVLFVSLLSA) are cleaved as a signal peptide. An Expansin-like EG45 domain is found at 63–173 (GGACGYGTLV…RRTACKYGGK (111 aa)). Intrachain disulfides connect Cys66-Cys95, Cys98-Cys168, and Cys103-Cys109. The Expansin-like CBD domain occupies 186 to 267 (FWLSLLVEFE…NWTPKATYTS (82 aa)).

It belongs to the expansin family. Expansin B subfamily.

It is found in the secreted. The protein localises to the cell wall. It localises to the membrane. Its function is as follows. May cause loosening and extension of plant cell walls by disrupting non-covalent bonding between cellulose microfibrils and matrix glucans. No enzymatic activity has been found. May be required for rapid internodal elongation in deepwater rice during submergence. This chain is Expansin-B16 (EXPB16), found in Oryza sativa subsp. japonica (Rice).